The primary structure comprises 99 residues: Large ribosomal subunit protein bL28 (99 aa).

The disordered stretch occupies residues 1-25 (MSRKCAVTGKGVQTGNNVSHANNKS). Residues 11-22 (GVQTGNNVSHAN) show a composition bias toward polar residues.

The protein belongs to the bacterial ribosomal protein bL28 family.

This chain is Large ribosomal subunit protein bL28, found in Rhodospirillum centenum (strain ATCC 51521 / SW).